A 157-amino-acid polypeptide reads, in one-letter code: Oleosin-B1 (157 aa).

Residues 2-20 (GILRKKKHERNASFKSVLT) are polar. The tract at residues 21-138 (SILATQAATF…AAPAAAPAAA (118 aa)) is hydrophobic. The next 3 helical transmembrane spans lie at 22-42 (ILATQAATFLLLISGVSLAGT), 45-65 (AFIATMPLFVVFSPILVPAGI), and 72-92 (TGLAAAGGAGATAVTIILWLY). 9 tandem repeats follow at residues 119–122 (PRAA), 123–126 (PAAA), 127–130 (PAAA), 131–134 (PAAA), 135–138 (PAAA), 139–142 (PAPK), 143–146 (PAAA), 147–150 (PAPK), and 151–154 (PAAP). The segment at 119 to 122 (PRAA) is 9 X 4 AA tandem repeats of P-[AR]-[AP]-[AKP]. The interval 137-157 (AAPAPKPAAAPAPKPAAPPAL) is disordered. Residues 138–157 (APAPKPAAAPAPKPAAPPAL) show a composition bias toward pro residues.

It belongs to the oleosin family. The full-length protein is found in the tapetal lipid bodies of immature anthers, the proteolytically cleaved C-terminal product is found on the coats of pollen grains. Highest expression is in microspores entering and undergoing mitosis. No expression is observed in male-sterile plants, green tissues or roots.

The protein resides in the lipid droplet. It is found in the membrane. Its function is as follows. Many of the major pollen coat proteins are derived from endoproteolytic cleavage of oleosin-like proteins. This chain is Oleosin-B1 (OlnB1), found in Brassica napus (Rape).